Consider the following 322-residue polypeptide: Probable cell division protein WhiA (322 aa).

Positions Ser-279–Ser-312 form a DNA-binding region, H-T-H motif.

The protein belongs to the WhiA family.

Functionally, involved in cell division and chromosome segregation. The sequence is that of Probable cell division protein WhiA from Desulforamulus reducens (strain ATCC BAA-1160 / DSM 100696 / MI-1) (Desulfotomaculum reducens).